The chain runs to 229 residues: Sperm flagellar protein 1 (229 aa).

A Calponin-homology (CH) domain is found at 7 to 115 (EETMQELYTW…TLRQKIEEKQ (109 aa)). The tract at residues 122–169 (ADLSQDQATQNNGNTHSDKGYKSNGTELSPRQGARVDPASKTHQGYAQ) is disordered. Polar residues predominate over residues 123–136 (DLSQDQATQNNGNT). The essential for homodimerization and microtubule bundling activity stretch occupies residues 178 to 229 (RFQLAEKEQTLILSQETIQILQAKLRRLEQLLLLKNVRIDDLTRRLQELEKK).

Homodimer.

The protein resides in the cytoplasm. The protein localises to the cytoskeleton. It is found in the cilium axoneme. It localises to the apical cell membrane. Microtubule-associated protein involved in the stabilization of microtubules along the axis of migration during radial intercalation. Promotes the establishment and stabilization of an axis of microtubules required for the active migration of cells into the outer epithelium. Microtubule-associated protein that promotes microtubule bundling and stabilizes microtubules against depolymerization in response to cold shock. Essential for ciliary central apparatus formation which requires both its microtubule-binding and bundling activities. Regulates planar cell polarity signaling pathway and asymmetric microtubule accumulation in ciliated epithelia. This chain is Sperm flagellar protein 1, found in Xenopus laevis (African clawed frog).